Here is a 132-residue protein sequence, read N- to C-terminus: Transthyretin-like protein 16 (132 aa).

Positions 1–19 are cleaved as a signal peptide; the sequence is MRSLVVCLLLAACALECTA. Asn23 carries an N-linked (GlcNAc...) asparagine glycan.

The protein belongs to the nematode transthyretin-like family.

Its subcellular location is the secreted. The sequence is that of Transthyretin-like protein 16 (ttr-16) from Caenorhabditis elegans.